The chain runs to 426 residues: Glutamate-1-semialdehyde 2,1-aminomutase (426 aa).

Residue lysine 265 is modified to N6-(pyridoxal phosphate)lysine.

The protein belongs to the class-III pyridoxal-phosphate-dependent aminotransferase family. HemL subfamily. Homodimer. Pyridoxal 5'-phosphate serves as cofactor.

The protein localises to the cytoplasm. The enzyme catalyses (S)-4-amino-5-oxopentanoate = 5-aminolevulinate. Its pathway is porphyrin-containing compound metabolism; protoporphyrin-IX biosynthesis; 5-aminolevulinate from L-glutamyl-tRNA(Glu): step 2/2. This chain is Glutamate-1-semialdehyde 2,1-aminomutase, found in Halorhodospira halophila (strain DSM 244 / SL1) (Ectothiorhodospira halophila (strain DSM 244 / SL1)).